A 227-amino-acid chain; its full sequence is 2-C-methyl-D-erythritol 4-phosphate cytidylyltransferase (227 aa).

It belongs to the IspD/TarI cytidylyltransferase family. IspD subfamily.

The enzyme catalyses 2-C-methyl-D-erythritol 4-phosphate + CTP + H(+) = 4-CDP-2-C-methyl-D-erythritol + diphosphate. It participates in isoprenoid biosynthesis; isopentenyl diphosphate biosynthesis via DXP pathway; isopentenyl diphosphate from 1-deoxy-D-xylulose 5-phosphate: step 2/6. In terms of biological role, catalyzes the formation of 4-diphosphocytidyl-2-C-methyl-D-erythritol from CTP and 2-C-methyl-D-erythritol 4-phosphate (MEP). The polypeptide is 2-C-methyl-D-erythritol 4-phosphate cytidylyltransferase (Dehalococcoides mccartyi (strain CBDB1)).